Here is a 420-residue protein sequence, read N- to C-terminus: MKTLIARHKAGEHIGICSVCSAHPLVIEAALAFDRNSTRKVLIEATSNQVNQFGGYTGMTPADFREFVFTIADKVGFARERIILGGDHLGPNCWQQENADAAMEKSVELVKAYVRAGFSKIHLDASMSCAGDPIPLAPETVAERAAVLCFAAESVATDCQREQLSYVIGTEVPVPGGEASAIQSVHITRVEDAANTLRTHQKAFIARGLAEALTRVIAIVVQPGVEFDHSNIIHYQPQEAQPLAQWIENTRMVYEAHSTDYQTRTAYWELVRDHFAILKVGPALTFALREAIFALAQIEQELIAPENRSGCLAVIEEVMFDEPQYWKKYYRTGFNDSLLDIRYSLSDRIRYYWPHSRIKNSVETMMVNLEGMEIPLGMISQYLPKQFERIQSGELSAIPHQLIMDKIYDVLRAYRYGCAE.

This sequence belongs to the GatZ/KbaZ family. GatZ subfamily. As to quaternary structure, forms a complex with GatY.

It participates in carbohydrate metabolism; D-tagatose 6-phosphate degradation; D-glyceraldehyde 3-phosphate and glycerone phosphate from D-tagatose 6-phosphate: step 2/2. Component of the tagatose-1,6-bisphosphate aldolase GatYZ that is required for full activity and stability of the Y subunit. Could have a chaperone-like function for the proper and stable folding of GatY. When expressed alone, GatZ does not show any aldolase activity. Is involved in the catabolism of galactitol. In Escherichia coli, this protein is D-tagatose-1,6-bisphosphate aldolase subunit GatZ (gatZ).